The sequence spans 205 residues: dITP/XTP pyrophosphatase (205 aa).

T10–K15 contacts substrate. Mg(2+) contacts are provided by E44 and D73. The active-site Proton acceptor is D73. Residues S74, F156–D159, K179, and H184–R185 each bind substrate.

The protein belongs to the HAM1 NTPase family. As to quaternary structure, homodimer. It depends on Mg(2+) as a cofactor.

The catalysed reaction is XTP + H2O = XMP + diphosphate + H(+). It carries out the reaction dITP + H2O = dIMP + diphosphate + H(+). The enzyme catalyses ITP + H2O = IMP + diphosphate + H(+). Its function is as follows. Pyrophosphatase that catalyzes the hydrolysis of nucleoside triphosphates to their monophosphate derivatives, with a high preference for the non-canonical purine nucleotides XTP (xanthosine triphosphate), dITP (deoxyinosine triphosphate) and ITP. Seems to function as a house-cleaning enzyme that removes non-canonical purine nucleotides from the nucleotide pool, thus preventing their incorporation into DNA/RNA and avoiding chromosomal lesions. This is dITP/XTP pyrophosphatase from Dictyoglomus thermophilum (strain ATCC 35947 / DSM 3960 / H-6-12).